Consider the following 498-residue polypeptide: Histidine--tRNA ligase (498 aa).

The protein belongs to the class-II aminoacyl-tRNA synthetase family. Homodimer.

The protein resides in the cytoplasm. The enzyme catalyses tRNA(His) + L-histidine + ATP = L-histidyl-tRNA(His) + AMP + diphosphate + H(+). The polypeptide is Histidine--tRNA ligase (Mycoplasmopsis synoviae (strain 53) (Mycoplasma synoviae)).